Consider the following 104-residue polypeptide: Large ribosomal subunit protein uL24 (104 aa).

This sequence belongs to the universal ribosomal protein uL24 family. In terms of assembly, part of the 50S ribosomal subunit.

In terms of biological role, one of two assembly initiator proteins, it binds directly to the 5'-end of the 23S rRNA, where it nucleates assembly of the 50S subunit. Functionally, one of the proteins that surrounds the polypeptide exit tunnel on the outside of the subunit. In Flavobacterium psychrophilum (strain ATCC 49511 / DSM 21280 / CIP 103535 / JIP02/86), this protein is Large ribosomal subunit protein uL24.